The primary structure comprises 65 residues: Large ribosomal subunit protein uL29 (65 aa).

This sequence belongs to the universal ribosomal protein uL29 family.

This chain is Large ribosomal subunit protein uL29, found in Methylococcus capsulatus (strain ATCC 33009 / NCIMB 11132 / Bath).